Reading from the N-terminus, the 459-residue chain is Transcriptional coactivator YAP1 (459 aa).

S21, S69, S87, and S119 each carry phosphoserine; by LATS1 and LATS2. Disordered stretches follow at residues 51–88 and 103–129; these read LPDS…AHSS and SGMA…VPLP. WW domains lie at 126–159 and 186–219; these read VPLP…DPRK and GPLP…DPRL. Disordered regions lie at residues 231-254 and 307-364; these read TQSA…MGGN and PTSM…SSYS. The transactivation domain stretch occupies residues 247–459; sequence HGGVMGGNNQ…IDKESFLTWL (213 aa). Polar residues-rich tracts occupy residues 307 to 347 and 355 to 364; these read PTSM…SGTY and DSGLSMSSYS.

Belongs to the YAP1 family. Post-translationally, phosphorylated by lats1 and lats2; leading to cytoplasmic translocation and inactivation. In terms of tissue distribution, ubiquitously expressed throughout development.

The protein resides in the cytoplasm. It is found in the nucleus. Its subcellular location is the cell junction. It localises to the tight junction. The protein localises to the cell membrane. Its function is as follows. Transcriptional regulator which can act both as a coactivator and a corepressor and is the critical downstream regulatory target in the Hippo signaling pathway that plays a pivotal role in organ size control and tumor suppression by restricting proliferation and promoting apoptosis. Plays a key role in tissue tension and 3D tissue shape by regulating cortical actomyosin network formation. This chain is Transcriptional coactivator YAP1, found in Oryzias latipes (Japanese rice fish).